Here is a 621-residue protein sequence, read N- to C-terminus: DnaJ homolog subfamily C member 2 (621 aa).

At M1 the chain carries N-acetylmethionine. Phosphoserine is present on residues S47, S49, S60, and S63. The region spanning 88–161 (DHYAVLGLGH…VKRRAFNSVD (74 aa)) is the J domain. A ZRF1-UBD region spans residues 160 to 250 (VDPTFDNSVP…RDERKWIEKQ (91 aa)). S183 is subject to Phosphoserine. 2 disordered regions span residues 287–312 (GKAK…KEKQ) and 426–453 (KEEA…GSKN). 2 consecutive SANT domains span residues 449 to 511 (SGSK…KLDP) and 549 to 604 (IDSI…EMVK).

In terms of assembly, component of ribosome-associated complex (RAC), a heterodimer composed of Hsp70/DnaK-type chaperone HSPA14 and Hsp40/DnaJ-type chaperone DNAJC2. Interacts (via ZRF1-UBD region) with ID1. Post-translationally, phosphorylated in M (mitotic) phase.

It localises to the nucleus. The protein localises to the cytoplasm. The protein resides in the cytosol. In terms of biological role, acts both as a chaperone in the cytosol and as a chromatin regulator in the nucleus. When cytosolic, acts as a molecular chaperone: component of the ribosome-associated complex (RAC), a complex involved in folding or maintaining nascent polypeptides in a folding-competent state. In the RAC complex, stimulates the ATPase activity of the ribosome-associated pool of Hsp70-type chaperones HSPA14 that bind to the nascent polypeptide chain. When nuclear, mediates the switching from polycomb-repressed genes to an active state: specifically recruited at histone H2A ubiquitinated at 'Lys-119' (H2AK119ub), and promotes the displacement of the polycomb PRC1 complex from chromatin, thereby facilitating transcription activation. The protein is DnaJ homolog subfamily C member 2 (Dnajc2) of Rattus norvegicus (Rat).